A 155-amino-acid chain; its full sequence is Large ribosomal subunit protein uL15 (155 aa).

Basic and acidic residues predominate over residues 1-13 (MKLNELRDCEGAT). Residues 1–47 (MKLNELRDCEGATKNRKRIGRGIGSGTGKTGGRGVKGQKSRSGVSLN) are disordered. Residues 21–35 (RGIGSGTGKTGGRGV) are compositionally biased toward gly residues.

The protein belongs to the universal ribosomal protein uL15 family. As to quaternary structure, part of the 50S ribosomal subunit.

Functionally, binds to the 23S rRNA. The protein is Large ribosomal subunit protein uL15 of Bartonella tribocorum (strain CIP 105476 / IBS 506).